The sequence spans 1407 residues: DNA-directed RNA polymerase subunit beta' (1407 aa).

Residues Cys-70, Cys-72, Cys-85, and Cys-88 each contribute to the Zn(2+) site. The Mg(2+) site is built by Asp-460, Asp-462, and Asp-464. Zn(2+)-binding residues include Cys-814, Cys-888, Cys-895, and Cys-898. Lys-972 carries the post-translational modification N6-acetyllysine.

The protein belongs to the RNA polymerase beta' chain family. As to quaternary structure, the RNAP catalytic core consists of 2 alpha, 1 beta, 1 beta' and 1 omega subunit. When a sigma factor is associated with the core the holoenzyme is formed, which can initiate transcription. The cofactor is Mg(2+). Requires Zn(2+) as cofactor.

The catalysed reaction is RNA(n) + a ribonucleoside 5'-triphosphate = RNA(n+1) + diphosphate. In terms of biological role, DNA-dependent RNA polymerase catalyzes the transcription of DNA into RNA using the four ribonucleoside triphosphates as substrates. The chain is DNA-directed RNA polymerase subunit beta' from Shigella dysenteriae serotype 1 (strain Sd197).